Here is a 140-residue protein sequence, read N- to C-terminus: Small ribosomal subunit protein uS19 (140 aa).

The interval 43–71 (IERGLTTEQQKLRETVRDADPQKTANDPI) is disordered. The span at 52–63 (QKLRETVRDADP) shows a compositional bias: basic and acidic residues.

Belongs to the universal ribosomal protein uS19 family.

Protein S19 forms a complex with S13 that binds strongly to the 16S ribosomal RNA. The sequence is that of Small ribosomal subunit protein uS19 from Haloquadratum walsbyi (strain DSM 16790 / HBSQ001).